Here is a 1178-residue protein sequence, read N- to C-terminus: MLKFQTVRGGLRLLGVRRSSSAPVASPNVRRLEYKPIKKVMVANRGEIAIRVFRACTELGIRTVAVYSEQDTGQMHRQKADEAYLIGRGLAPVQAYLHIPDIIKVAKENGVDAVHPGYGFLSERADFAQACQDAGVRFIGPSPEVVRKMGDKVEARAIAIAAGVPVVPGTDSPISSLHEAHEFSNTFGFPIIFKAAYGGGGRGMRVVHSYEELEENYTRAYSEALAAFGNGALFVEKFIEKPRHIEVQILGDQYGNILHLYERDCSIQRRHQKVVEIAPATHLDPQLRSRLTSDSVKLAKQVGYENAGTVEFLVDKHGKHYFIEVNSRLQVEHTVTEEITDVDLVHAQIHVSEGRSLPDLGLRQENIRINGCAIQCRVTTEDPARSFQPDTGRIEVFRSGEGMGIRLDNASAFQGAVISPHYDSLLVKVIAHGKDHPTAATKMSRALAEFRVRGVKTNIPFLQNVLNNQQFLAGTVDTQFIDENPELFQLRPAQNRAQKLLHYLGHVMVNGPTTPIPVNVSPSPVDPAVPVVPIGPPPAGFRDILLREGPEGFARAVRNHQGLLLMDTTFRDAHQSLLATRVRTHDLKKIAPYVAHNFNKLFSMENWGGATFDVAMRFLYECPWRRLQELRELIPNIPFQMLLRGANAVGYTNYPDNVVFKFCEVAKENGMDVFRVFDSLNYLPNMLLGMEAAGSAGGVVEAAISYTGDVADPSRTKYSLEYYMGLAEELVRAGTHILCIKDMAGLLKPAACTMLVSSLRDRFPDLPLHIHTHDTSGAGVAAMLACAQAGADVVDVAVDSMSGMTSQPSMGALVACTKGTPLDTEVPLERVFDYSEYWEGARGLYAAFDCTATMKSGNSDVYENEIPGGQYTNLHFQAHSMGLGSKFKEVKKAYVEANQMLGDLIKVTPSSKIVGDLAQFMVQNGLSRAEAEAQAEELSFPRSVVEFLQGYIGIPHGGFPEPFRSKVLKDLPRIEGRPGASLPPLNLKELEKDLIDRHGEEVTPEDVLSAAMYPDVFAQFKDFTATFGPLDSLNTRLFLQGPKIAEEFEVELERGKTLHIKALAVSDLNRAGQRQVFFELNGQLRSILVKDTQAMKEMHFHPKALKDVKGQIGAPMPGKVIDIKVAAGDKVAKGQPLCVLSAMKMETVVTSPMEGTIRKVHVTKDMTLEGDDLILEIE.

The transit peptide at 1–20 (MLKFQTVRGGLRLLGVRRSS) directs the protein to the mitochondrion. The residue at position 21 (Ser21) is a Phosphoserine. Lys35 and Lys39 each carry N6-acetyllysine. Positions 36–486 (PIKKVMVANR…DTQFIDENPE (451 aa)) constitute a Biotin carboxylation domain. Lys79 is modified (N6-acetyllysine; alternate). Residue Lys79 is modified to N6-succinyllysine; alternate. Lys148 and Lys152 each carry N6-acetyllysine. Residues Lys152 and Glu236 each contribute to the ATP site. One can recognise an ATP-grasp domain in the interval 156–353 (RAIAIAAGVP…LVHAQIHVSE (198 aa)). Residue Lys241 is modified to N6-acetyllysine. ATP is bound at residue His271. N6-acetyllysine occurs at positions 297, 316, and 319. The active site involves Arg328. Lys434 carries the post-translational modification N6-acetyllysine. Lys442 carries the post-translational modification N6-succinyllysine. The Pyruvate carboxyltransferase domain occupies 563–832 (LLLMDTTFRD…DTEVPLERVF (270 aa)). 571-575 (RDAHQ) serves as a coordination point for substrate. Position 572 (Asp572) interacts with Mn(2+). Position 589 is an N6-acetyllysine (Lys589). Residue Arg644 participates in substrate binding. Lys661 and Lys717 each carry N6-acetyllysine. Position 741 (Lys741) interacts with Mn(2+). Lys741 carries the N6-carboxylysine modification. Lys748 bears the N6-acetyllysine mark. Mn(2+) is bound by residues His771 and His773. An N6-acetyllysine modification is found at Lys892. Residue Thr908 participates in substrate binding. Lys969 carries the post-translational modification N6-acetyllysine. Position 988 is an N6-acetyllysine; alternate (Lys988). Lys988 is subject to N6-succinyllysine; alternate. Lys992 carries the N6-acetyllysine modification. A Phosphothreonine modification is found at Thr1003. An N6-acetyllysine mark is found at Lys1061, Lys1090, and Lys1124. Positions 1109-1178 (KGQIGAPMPG…EGDDLILEIE (70 aa)) constitute a Biotinyl-binding domain. Lys1144 carries the N6-biotinyllysine modification.

In terms of assembly, homotetramer. Interacts (via the biotin carboxylation domain) with SIRT4. Biotin serves as cofactor. Mn(2+) is required as a cofactor. Acetylation of Lys-316 is observed in liver mitochondria from fasted mice but not from fed mice. Acetylation of Lys-748 might play a role in catalytic activity regulation. In terms of tissue distribution, liver, kidney, adipose tissue, liver and brain.

The protein localises to the mitochondrion matrix. It catalyses the reaction hydrogencarbonate + pyruvate + ATP = oxaloacetate + ADP + phosphate + H(+). Its pathway is carbohydrate biosynthesis; gluconeogenesis. In terms of biological role, pyruvate carboxylase catalyzes a 2-step reaction, involving the ATP-dependent carboxylation of the covalently attached biotin in the first step and the transfer of the carboxyl group to pyruvate in the second. Catalyzes in a tissue specific manner, the initial reactions of glucose (liver, kidney) and lipid (adipose tissue, liver, brain) synthesis from pyruvate. The chain is Pyruvate carboxylase, mitochondrial (Pc) from Mus musculus (Mouse).